The following is a 484-amino-acid chain: Probable cytochrome P450 555A1 (484 aa).

A helical membrane pass occupies residues 1-21 (MIIIVIVVFLFYFSFLNLNLN). C432 contributes to the heme binding site.

The protein belongs to the cytochrome P450 family. It depends on heme as a cofactor.

The protein resides in the membrane. The sequence is that of Probable cytochrome P450 555A1 (cyp555A1) from Dictyostelium discoideum (Social amoeba).